We begin with the raw amino-acid sequence, 288 residues long: Pyridoxal kinase PdxY (288 aa).

Substrate contacts are provided by residues Ser-9 and 44–45; that span reads TQ. ATP is bound by residues Asp-111, Glu-148, and Lys-181. Substrate is bound at residue Asp-224.

It belongs to the pyridoxine kinase family. PdxY subfamily. As to quaternary structure, homodimer. It depends on Mg(2+) as a cofactor.

It carries out the reaction pyridoxal + ATP = pyridoxal 5'-phosphate + ADP + H(+). It functions in the pathway cofactor metabolism; pyridoxal 5'-phosphate salvage; pyridoxal 5'-phosphate from pyridoxal: step 1/1. Functionally, pyridoxal kinase involved in the salvage pathway of pyridoxal 5'-phosphate (PLP). Catalyzes the phosphorylation of pyridoxal to PLP. The polypeptide is Pyridoxal kinase PdxY (Haemophilus influenzae (strain ATCC 51907 / DSM 11121 / KW20 / Rd)).